A 61-amino-acid polypeptide reads, in one-letter code: Small ribosomal subunit protein uS14 (61 aa).

Positions 24, 27, 40, and 43 each coordinate Zn(2+).

This sequence belongs to the universal ribosomal protein uS14 family. Zinc-binding uS14 subfamily. Part of the 30S ribosomal subunit. Contacts proteins S3 and S10. Zn(2+) is required as a cofactor.

Binds 16S rRNA, required for the assembly of 30S particles and may also be responsible for determining the conformation of the 16S rRNA at the A site. The chain is Small ribosomal subunit protein uS14 from Beutenbergia cavernae (strain ATCC BAA-8 / DSM 12333 / CCUG 43141 / JCM 11478 / NBRC 16432 / NCIMB 13614 / HKI 0122).